The chain runs to 465 residues: Gamma-aminobutyric acid receptor subunit rho-2 (465 aa).

The first 20 residues, 1-20, serve as a signal peptide directing secretion; the sequence is MPYFTRLILFLFCLMVLVES. Topologically, residues 21 to 260 are extracellular; that stretch reads RKPKRKRWTG…LYINFTLRRH (240 aa). Arg105 contributes to the 4-aminobutanoate binding site. Residue Asn120 is glycosylated (N-linked (GlcNAc...) asparagine). Ser169 contributes to the 4-aminobutanoate binding site. A disulfide bridge connects residues Cys178 and Cys192. Glu197 is a 4-aminobutanoate binding site. Residue Asn254 is glycosylated (N-linked (GlcNAc...) asparagine). The helical transmembrane segment at 261–281 threads the bilayer; sequence IFFFLLQTYFPATLMVMLSWV. The Cytoplasmic portion of the chain corresponds to 282–293; the sequence is SFWIDRRAVPAR. A helical membrane pass occupies residues 294 to 314; the sequence is VSLGITTVLTMTTIITGVNAS. Residues 315–325 are Extracellular-facing; it reads MPRVSYVKAVD. A helical transmembrane segment spans residues 326–346; that stretch reads IYLWVSFVFVFLSVLEYAAVN. Topologically, residues 347–443 are cytoplasmic; sequence YLTTVQERKE…IFQNTHAIDK (97 aa). A helical membrane pass occupies residues 444 to 464; that stretch reads YSRLIFPASYIFFNLIYWSVF. Ser465 is a topological domain (extracellular).

Belongs to the ligand-gated ion channel (TC 1.A.9) family. Gamma-aminobutyric acid receptor (TC 1.A.9.5) subfamily. GABRR2 sub-subfamily. As to quaternary structure, three rho subunits (rho-1/GBRR1, rho-2/GBRR2 and rho-3/GBRR3) coassemble either to form functional homopentamers or heteropentamers. Rho-2 is unable to form a functional homopentamer. Interacts with SQSTM1.

It is found in the postsynaptic cell membrane. Its subcellular location is the cell membrane. It catalyses the reaction chloride(in) = chloride(out). Its function is as follows. Rho subunit of the pentameric ligand-gated chloride channels responsible for mediating the effects of gamma-aminobutyric acid (GABA), the major inhibitory neurotransmitter in the brain. Rho-containing GABA-gated chloride channels are a subclass of GABA(A) receptors (GABAARs) entirely composed of rho subunits, where GABA molecules bind at the rho intersubunit interfaces. When activated by GABA, rho-GABAARs selectively allow the flow of chloride anions across the cell membrane down their electrochemical gradient. Rho-2 GABAARs may contribute to the regulation of glial development in the cerebellum by controlling extrasynaptic transmission. Rho-2 GABAARs are also involved in neuronal tonic (extrasynaptic) and phasic (synaptic) transmission in the Purkinje neurons of the cerebellum. Rho-2 GABAARs expressed in retina may play a role in retinal neurotransmission. The protein is Gamma-aminobutyric acid receptor subunit rho-2 of Homo sapiens (Human).